A 481-amino-acid polypeptide reads, in one-letter code: uncharacterized protein (481 aa).

11 consecutive transmembrane segments (helical) span residues 14–34 (LGFC…GIFL), 46–66 (FAPM…IVFA), 90–110 (IGIY…GVLA), 134–154 (FSVK…INLF), 167–187 (TVGK…IITT), 218–238 (FSSM…FESI), 258–278 (IAIF…MLLG), 303–323 (IIVV…SFGA), 377–397 (LAVI…IALA), 411–431 (AFTD…LAVS), and 446–466 (YFSI…AYLH).

This sequence belongs to the amino acid-polyamine-organocation (APC) superfamily.

It localises to the cell membrane. In terms of biological role, probable amino-acid or metabolite transport protein. This is an uncharacterized protein from Mycobacterium bovis (strain ATCC BAA-935 / AF2122/97).